We begin with the raw amino-acid sequence, 141 residues long: Hemoglobin subunit alpha (141 aa).

One can recognise a Globin domain in the interval 1–141; the sequence is VLSSKDKANV…VSTVLTSKYR (141 aa). Ser-3 carries the post-translational modification Phosphoserine. N6-succinyllysine is present on residues Lys-7 and Lys-11. At Lys-16 the chain carries N6-acetyllysine; alternate. The residue at position 16 (Lys-16) is an N6-succinyllysine; alternate. Residue Tyr-24 is modified to Phosphotyrosine. At Lys-40 the chain carries N6-succinyllysine. Ser-49 carries the post-translational modification Phosphoserine. His-58 contacts O2. His-87 is a binding site for heme b. Position 102 is a phosphoserine (Ser-102). At Thr-108 the chain carries Phosphothreonine. Ser-124 is subject to Phosphoserine. Phosphothreonine occurs at positions 134 and 137. Ser-138 bears the Phosphoserine mark.

Belongs to the globin family. As to quaternary structure, heterotetramer of two alpha chains and two beta chains. In terms of tissue distribution, red blood cells.

In terms of biological role, involved in oxygen transport from the lung to the various peripheral tissues. Its function is as follows. Hemopressin acts as an antagonist peptide of the cannabinoid receptor CNR1. Hemopressin-binding efficiently blocks cannabinoid receptor CNR1 and subsequent signaling. This Lama vicugna (Vicugna) protein is Hemoglobin subunit alpha (HBA).